The following is a 324-amino-acid chain: Nidogen-1 (324 aa).

Residues 16–178 (PFLADLDTTD…GVWVFEIGSP (163 aa)) form the NIDO domain. N97 carries N-linked (GlcNAc...) asparagine glycosylation. Residues Y200 and Y205 each carry the sulfotyrosine modification. The disordered stretch occupies residues 219 to 259 (TQPFPSHSPRRGYPDPHNVPRTLAPSYEATERPHGIPTERT). The span at 247–259 (ATERPHGIPTERT) shows a compositional bias: basic and acidic residues. The EGF-like domain maps to 295 to 324 (SQQTCANNRHQCSVHAECRDYATGFCCRCV). Disulfide bonds link C299–C312 and C306–C321.

Interacts with FBLN1. Interacts with LGALS3BP. Interacts with PLXDC1. Interacts with SVEP1. N- and O-glycosylated.

It localises to the secreted. The protein localises to the extracellular space. Its subcellular location is the extracellular matrix. It is found in the basement membrane. Functionally, sulfated glycoprotein widely distributed in basement membranes and tightly associated with laminin. Also binds to collagen IV and perlecan. It probably has a role in cell-extracellular matrix interactions. This Rattus norvegicus (Rat) protein is Nidogen-1 (Nid1).